A 550-amino-acid chain; its full sequence is Flagellin (550 aa).

It belongs to the bacterial flagellin family.

The protein localises to the secreted. It is found in the bacterial flagellum. Flagellin is the subunit protein which polymerizes to form the filaments of bacterial flagella. The polypeptide is Flagellin (fliC) (Shigella flexneri).